Here is an 844-residue protein sequence, read N- to C-terminus: Lysine-specific histone demethylase 1 homolog 1 (844 aa).

Residues 1–18 (MSTETKETRPETKPEDLG) show a composition bias toward basic and acidic residues. A disordered region spans residues 1–131 (MSTETKETRP…PGPRARKRRR (131 aa)). Residues 26 to 40 (PGEEPLGELIADDVN) are compositionally biased toward acidic residues. Polar residues-rich tracts occupy residues 46–62 (ASAT…QSEQ) and 107–118 (DLVTEQQSQNPN). Positions 154 to 255 (GKEVDSEALI…FGLAPVIKEA (102 aa)) constitute an SWIRM domain. FAD-binding residues include E295, R297, and R303. A Nuclear localization signal motif is present at residues 516-523 (LKKGSIEF). E679 provides a ligand contact to FAD.

The protein belongs to the flavin monoamine oxidase family. In terms of assembly, interacts with CZS. Interacts with OTU6/OTLD1. It depends on FAD as a cofactor. As to expression, expressed in the shoot and root apical regions of young seedlings. Expressed in cotyledons and inflorescences.

Its subcellular location is the nucleus. The protein resides in the cytoplasm. In terms of biological role, probable histone demethylase that reduces the levels of histone H3 'Lys-4' methylation in chromatin of the floral repressor FLOWERING LOCUS C (FLC) and the sporophytically silenced floral repressor FWA. Seems to act in partial redundancy with FLOWERING LOCUS D (FLD) to repress FLC expression. Required for cytosine methylation of FWA. Controls primary seed dormancy by regulating DOG1 and abscisic acid signaling-related genes. In association with OTU6/OTLD1, involved in transcriptional gene repression via histone deubiquitination and demethylation. In Arabidopsis thaliana (Mouse-ear cress), this protein is Lysine-specific histone demethylase 1 homolog 1.